Here is a 187-residue protein sequence, read N- to C-terminus: Large ribosomal subunit protein uL5 (187 aa).

Belongs to the universal ribosomal protein uL5 family. As to quaternary structure, part of the 50S ribosomal subunit; part of the 5S rRNA/L5/L18/L25 subcomplex. Contacts the 5S rRNA and the P site tRNA. Forms a bridge to the 30S subunit in the 70S ribosome.

Its function is as follows. This is one of the proteins that bind and probably mediate the attachment of the 5S RNA into the large ribosomal subunit, where it forms part of the central protuberance. In the 70S ribosome it contacts protein S13 of the 30S subunit (bridge B1b), connecting the 2 subunits; this bridge is implicated in subunit movement. Contacts the P site tRNA; the 5S rRNA and some of its associated proteins might help stabilize positioning of ribosome-bound tRNAs. The protein is Large ribosomal subunit protein uL5 of Mycobacterium sp. (strain JLS).